A 248-amino-acid polypeptide reads, in one-letter code: 14-3-3 protein sigma (248 aa).

3 positions are modified to phosphoserine: serine 5, serine 74, and serine 248.

This sequence belongs to the 14-3-3 family. As to quaternary structure, homodimer. Interacts with KRT17 and SAMSN1. Found in a complex with XPO7, EIF4A1, ARHGAP1, VPS26A, VPS29 and VPS35. Interacts with GAB2. Interacts with SRPK2. Interacts with COPS6. Interacts with COP1; this interaction leads to proteasomal degradation. Interacts with the 'Thr-369' phosphorylated form of DAPK2. Interacts with PI4KB. Interacts with SLITRK1. Interacts with LRRK2; this interaction is dependent on LRRK2 phosphorylation. Interacts with PKP3 (via N-terminus); the interaction maintains the cytoplasmic pool of PKP3, facilitates PKP3 exchange at desmosomes and restricts PKP3 localization to existing desmosome cell junctions. Interacts with LCP2. In terms of processing, ubiquitinated. Ubiquitination by RFFL induces proteasomal degradation and indirectly regulates p53/TP53 activation.

It localises to the cytoplasm. Its subcellular location is the nucleus. The protein localises to the secreted. In terms of biological role, adapter protein implicated in the regulation of a large spectrum of both general and specialized signaling pathways. Binds to a large number of partners, usually by recognition of a phosphoserine or phosphothreonine motif. Binding generally results in the modulation of the activity of the binding partner. Promotes cytosolic retention of GBP1 GTPase by binding to phosphorylated GBP1, thereby inhibiting the innate immune response. Also acts as a TP53/p53-regulated inhibitor of G2/M progression. When bound to KRT17, regulates protein synthesis and epithelial cell growth by stimulating Akt/mTOR pathway. Acts to maintain desmosome cell junction adhesion in epithelial cells via interacting with and sequestering PKP3 to the cytoplasm, thereby restricting its translocation to existing desmosome structures and therefore maintaining desmosome protein homeostasis. Also acts to facilitate PKP3 exchange at desmosome plaques, thereby maintaining keratinocyte intercellular adhesion. May also regulate MDM2 autoubiquitination and degradation and thereby activate p53/TP53. The chain is 14-3-3 protein sigma (SFN) from Bos taurus (Bovine).